A 165-amino-acid chain; its full sequence is Peptidyl-prolyl cis-trans isomerase NIMA-interacting 1 (165 aa).

Residues Glu5 to Gly39 enclose the WW domain. The tract at residues Gln33–Lys56 is disordered. Position 48 is an N6-acetyllysine (Lys48). Positions Pro54–Glu165 constitute a PpiC domain. Phosphoserine occurs at positions 73 and 110.

As to quaternary structure, interacts with STIL. Interacts with KIF20B. Interacts with NEK6. Interacts (via WW domain) with PRKX. Interacts with BTK. Interacts (via PpiC domain) with DAPK1. Interacts with the phosphorylated form of RAF1. Interacts (via WW domain) with ATCAY; upon NGF stimulation. Interacts with PML. Interacts with BCL6. Interacts with FBXW7, disrupting FBXW7 dimerization and promoting FBXW7 autoubiquitination and degradation. Directly interacts with RBBP8/CtIP; this interaction depends upon RBBP8 phosphorylation. Interacts (via WW domain) with IRAK3/IRAK-M (when phosphorylated at 'Ser-110') in response to IL33-mediated (but not TLR4 ligand LPS) dendritic cell stimulation. Interacts with PGK1 (when phosphorylated at 'Ser-203'); the interaction is direct, occurs under hypoxic conditions, and targets PGK1 to the mitochondrion by promoting interactions with the TOM complex. In terms of processing, phosphorylation at Ser-73 by DAPK1 results in inhibition of its catalytic activity, nuclear localization, and its ability to induce centrosome amplification, chromosome instability and cell transformation. Ser-73 is dephosphorylated upon IL33-stimulation of dendritic cells. In terms of tissue distribution, expressed in dendritic cells (at protein level).

It localises to the nucleus. The protein resides in the nucleus speckle. It is found in the cytoplasm. It carries out the reaction [protein]-peptidylproline (omega=180) = [protein]-peptidylproline (omega=0). Peptidyl-prolyl cis/trans isomerase (PPIase) that binds to and isomerizes specific phosphorylated Ser/Thr-Pro (pSer/Thr-Pro) motifs. By inducing conformational changes in a subset of phosphorylated proteins, acts as a molecular switch in multiple cellular processes. Displays a preference for an acidic residue N-terminal to the isomerized proline bond. Regulates mitosis presumably by interacting with NIMA and attenuating its mitosis-promoting activity. Down-regulates kinase activity of BTK. Can transactivate multiple oncogenes and induce centrosome amplification, chromosome instability and cell transformation. Required for the efficient dephosphorylation and recycling of RAF1 after mitogen activation. Binds and targets PML and BCL6 for degradation in a phosphorylation-dependent manner. Acts as a regulator of JNK cascade by binding to phosphorylated FBXW7, disrupting FBXW7 dimerization and promoting FBXW7 autoubiquitination and degradation: degradation of FBXW7 leads to subsequent stabilization of JUN. May facilitate the ubiquitination and proteasomal degradation of RBBP8/CtIP through CUL3/KLHL15 E3 ubiquitin-protein ligase complex, hence favors DNA double-strand repair through error-prone non-homologous end joining (NHEJ) over error-free, RBBP8-mediated homologous recombination (HR). Upon IL33-induced lung inflammation, catalyzes cis-trans isomerization of phosphorylated IRAK3/IRAK-M, inducing IRAK3 stabilization, nuclear translocation and expression of pro-inflammatory genes in dendritic cells. Catalyzes cis-trans isomerization of phosphorylated phosphoglycerate kinase PGK1 under hypoxic conditions to promote its binding to the TOM complex and targeting to the mitochondrion. This Mus musculus (Mouse) protein is Peptidyl-prolyl cis-trans isomerase NIMA-interacting 1 (Pin1).